The chain runs to 543 residues: Organic anion transporter 3 (543 aa).

The Cytoplasmic segment spans residues 1-21 (MTFAELVDRVGSKGPFQLLHT). The chain crosses the membrane as a helical span at residues 22 to 42 (VLLGLPILGMANHNLLQIFTA). Residues 43-124 (PTPAHHCRPP…LVCSSSKLKE (82 aa)) are Extracellular-facing. A glycan (N-linked (GlcNAc...) asparagine) is linked at Asn-81. The chain crosses the membrane as a helical span at residues 125–145 (MAQSVFMAGILVGGLVLGALS). Over 146-151 (DRFGRK) the chain is Cytoplasmic. A helical transmembrane segment spans residues 152–172 (PILIFSYLLLGASGSGAAFSP). The Extracellular portion of the chain corresponds to 173-181 (TFSIYAVFR). The chain crosses the membrane as a helical span at residues 182-202 (FLCGFSISGISLSTAILNVEW). The Cytoplasmic segment spans residues 203–212 (VSTRFRAIKS). The helical transmembrane segment at 213–233 (IAVGFFYTFGQFILPGLAYAI) threads the bilayer. Residues 234 to 237 (PQWR) are Extracellular-facing. The chain crosses the membrane as a helical span at residues 238 to 258 (WLQLTVSVPFLTFFLLSWWLP). Topologically, residues 259 to 328 (ESIRWMVLSG…FRTPVLRRVT (70 aa)) are cytoplasmic. A helical membrane pass occupies residues 329–349 (LCLSLAWFATGFAYYSLAMGV). Topologically, residues 350-355 (EEFGVN) are extracellular. The helical transmembrane segment at 356–376 (LYVLQLIFGGVDVPAKFITML) threads the bilayer. The Cytoplasmic segment spans residues 377-388 (SISYLGRHITEG). A helical membrane pass occupies residues 389–409 (IVLLLAGGCILALIFVPLDLM). The Extracellular segment spans residues 410 to 412 (TLR). The chain crosses the membrane as a helical span at residues 413-433 (TVLAVFGKGCLSGSFSCLFLY). The Cytoplasmic portion of the chain corresponds to 434–472 (TSELYPTVIRQTGMGASNLWARVGSMTAPLVKITGELQP). A helical transmembrane segment spans residues 473-493 (FIPNIIFGTIALLGGSAALFL). The Extracellular portion of the chain corresponds to 494–543 (PETLNRPLPETIEDIETWSLRAKEPKPEPEAEKSSQRIPLQPCEPGPGPS). Positions 513 to 543 (LRAKEPKPEPEAEKSSQRIPLQPCEPGPGPS) are disordered. Basic and acidic residues predominate over residues 514–528 (RAKEPKPEPEAEKSS).

It belongs to the major facilitator (TC 2.A.1) superfamily. Organic cation transporter (TC 2.A.1.19) family. As to expression, expressed in kidney.

Its subcellular location is the basolateral cell membrane. The enzyme catalyses estrone 3-sulfate(out) + glutarate(in) = estrone 3-sulfate(in) + glutarate(out). It catalyses the reaction estrone 3-sulfate(in) + 2-oxoglutarate(out) = estrone 3-sulfate(out) + 2-oxoglutarate(in). It carries out the reaction glutarate(in) + 2-oxoglutarate(out) = glutarate(out) + 2-oxoglutarate(in). The catalysed reaction is urate(in) + 2-oxoglutarate(out) = urate(out) + 2-oxoglutarate(in). The enzyme catalyses taurocholate(out) + glutarate(in) = taurocholate(in) + glutarate(out). It catalyses the reaction dehydroepiandrosterone 3-sulfate(out) + glutarate(in) = dehydroepiandrosterone 3-sulfate(in) + glutarate(out). It carries out the reaction prostaglandin F2alpha(out) + glutarate(in) = prostaglandin F2alpha(in) + glutarate(out). The catalysed reaction is prostaglandin F2alpha(out) + 2-oxoglutarate(in) = prostaglandin F2alpha(in) + 2-oxoglutarate(out). The enzyme catalyses (R)-carnitine(out) + 2-oxoglutarate(in) = (R)-carnitine(in) + 2-oxoglutarate(out). It catalyses the reaction glutarate(in) + (R)-carnitine(out) = glutarate(out) + (R)-carnitine(in). It carries out the reaction prostaglandin E2(out) + 2-oxoglutarate(in) = prostaglandin E2(in) + 2-oxoglutarate(out). The catalysed reaction is prostaglandin E2(out) + glutarate(in) = prostaglandin E2(in) + glutarate(out). The enzyme catalyses urate(in) + glutarate(out) = urate(out) + glutarate(in). It catalyses the reaction taurocholate(out) + 2-oxoglutarate(in) = taurocholate(in) + 2-oxoglutarate(out). It carries out the reaction dehydroepiandrosterone 3-sulfate(out) + 2-oxoglutarate(in) = dehydroepiandrosterone 3-sulfate(in) + 2-oxoglutarate(out). The catalysed reaction is kynurenate(out) + a dicarboxylate(in) = kynurenate(in) + a dicarboxylate(out). The enzyme catalyses (indol-3-yl)acetate(out) + a dicarboxylate(in) = (indol-3-yl)acetate(in) + a dicarboxylate(out). It catalyses the reaction indoxyl sulfate(out) + a dicarboxylate(in) = indoxyl sulfate(in) + a dicarboxylate(out). It carries out the reaction N-benzoylglycine(out) + a dicarboxylate(in) = N-benzoylglycine(in) + a dicarboxylate(out). The catalysed reaction is 3-carboxy-4-methyl-5-propyl-2-furanpropanoate(out) + a dicarboxylate(in) = 3-carboxy-4-methyl-5-propyl-2-furanpropanoate(in) + a dicarboxylate(out). The enzyme catalyses (6R)-L-erythro-5,6,7,8-tetrahydrobiopterin(out) + a dicarboxylate(in) = (6R)-L-erythro-5,6,7,8-tetrahydrobiopterin(in) + a dicarboxylate(out). It catalyses the reaction L-erythro-7,8-dihydrobiopterin(out) + a dicarboxylate(in) = L-erythro-7,8-dihydrobiopterin(in) + a dicarboxylate(out). It carries out the reaction L-sepiapterin(out) + a dicarboxylate(in) = L-sepiapterin(in) + a dicarboxylate(out). Its function is as follows. Functions as an organic anion/dicarboxylate exchanger that couples organic anion uptake indirectly to the sodium gradient. Transports organic anions such as estrone 3-sulfate (E1S) and urate in exchange for dicarboxylates such as glutarate or ketoglutarate (2-oxoglutarate). Plays an important role in the excretion of endogenous and exogenous organic anions, especially from the kidney and the brain. E1S transport is pH- and chloride-dependent and may also involve E1S/cGMP exchange. Responsible for the transport of prostaglandin E2 (PGE2) and prostaglandin F2(alpha) (PGF2(alpha)) in the basolateral side of the renal tubule. Involved in the transport of neuroactive tryptophan metabolites kynurenate and xanthurenate. Functions as a biopterin transporters involved in the uptake and the secretion of coenzymes tetrahydrobiopterin (BH4), dihydrobiopterin (BH2) and sepiapterin to urine, thereby determining baseline levels of blood biopterins. May be involved in the basolateral transport of steviol, a metabolite of the popular sugar substitute stevioside. May participate in the detoxification/ renal excretion of drugs and xenobiotics, such as the histamine H(2)-receptor antagonists fexofenadine and cimetidine, the antibiotic benzylpenicillin (PCG), the anionic herbicide 2,4-dichloro-phenoxyacetate (2,4-D), the diagnostic agent p-aminohippurate (PAH), the antiviral acyclovir (ACV), and the mycotoxin ochratoxin (OTA), by transporting these exogenous organic anions across the cell membrane in exchange for dicarboxylates such as 2-oxoglutarate. Contributes to the renal uptake of potent uremic toxins (indoxyl sulfate (IS), indole acetate (IA), hippurate/N-benzoylglycine (HA) and 3-carboxy-4-methyl-5-propyl-2-furanpropionate (CMPF)), pravastatin, PCG, E1S and dehydroepiandrosterone sulfate (DHEAS), and is partly involved in the renal uptake of temocaprilat (an angiotensin-converting enzyme (ACE) inhibitor). May contribute to the release of cortisol in the adrenals. Involved in one of the detoxification systems on the choroid plexus (CP), removes substrates such as E1S or taurocholate (TC), PCG, 2,4-D and PAH, from the cerebrospinal fluid (CSF) to the blood for eventual excretion in urine and bile. Also contributes to the uptake of several other organic compounds such as the prostanoids prostaglandin E(2) and prostaglandin F(2-alpha), L-carnitine, and the therapeutic drugs allopurinol, 6-mercaptopurine (6-MP) and 5-fluorouracil (5-FU). Mediates the transport of PAH, PCG, and the statins pravastatin and pitavastatin, from the cerebrum into the blood circulation across the blood-brain barrier (BBB). In summary, plays a role in the efflux of drugs and xenobiotics, helping reduce their undesired toxicological effects on the body. The chain is Organic anion transporter 3 (SLC22A8) from Sus scrofa (Pig).